The primary structure comprises 448 residues: RNA-binding protein 42 (448 aa).

Positions 1–29 (MAGAGPAPGLPGAGGPVVPGPGAGIPGKS) are disordered. Position 2 is an N-acetylalanine (Ala-2). Over residues 11–27 (PGAGGPVVPGPGAGIPG) the composition is skewed to gly residues. Ser-132 is subject to Phosphoserine. The residue at position 149 (Arg-149) is an Asymmetric dimethylarginine. Residues 204–448 (ELGLGLGLGL…QKEKKKLGLR (245 aa)) form a necessary for interaction with HNRNPK region. The segment at 286–324 (LSLRPRPRPPRPEPPPGLMALEVPEPLSEDKKKGKPEKL) is disordered. Over residues 313–324 (SEDKKKGKPEKL) the composition is skewed to basic and acidic residues. Residues 349–427 (FRIFCGDLGN…RPIKLRKSMW (79 aa)) enclose the RRM domain.

This sequence belongs to the RRM RBM42 family. Interacts with HNRNPK.

The protein resides in the nucleus. The protein localises to the cytoplasm. In terms of biological role, binds (via the RRM domain) to the 3'-untranslated region (UTR) of CDKN1A mRNA. The protein is RNA-binding protein 42 (RBM42) of Bos taurus (Bovine).